A 233-amino-acid polypeptide reads, in one-letter code: 7-cyano-7-deazaguanine synthase (233 aa).

7-17 (LSGGLDSAVTS) provides a ligand contact to ATP. Zn(2+)-binding residues include Cys195, Cys206, Cys209, and Cys212.

This sequence belongs to the QueC family. Zn(2+) serves as cofactor.

The catalysed reaction is 7-carboxy-7-deazaguanine + NH4(+) + ATP = 7-cyano-7-deazaguanine + ADP + phosphate + H2O + H(+). The protein operates within purine metabolism; 7-cyano-7-deazaguanine biosynthesis. Functionally, catalyzes the ATP-dependent conversion of 7-carboxy-7-deazaguanine (CDG) to 7-cyano-7-deazaguanine (preQ(0)). In Methanococcus maripaludis (strain DSM 14266 / JCM 13030 / NBRC 101832 / S2 / LL), this protein is 7-cyano-7-deazaguanine synthase.